Consider the following 247-residue polypeptide: Putative cyclin-T1-1 (247 aa).

This sequence belongs to the cyclin family. Cyclin T subfamily.

In Arabidopsis thaliana (Mouse-ear cress), this protein is Putative cyclin-T1-1 (CYCT1-1).